The chain runs to 203 residues: Orotate phosphoribosyltransferase (203 aa).

5-phospho-alpha-D-ribose 1-diphosphate contacts are provided by residues Arg-94, Lys-95, Lys-98, His-100, and 119-127 (DDVATTGGS). Orotate-binding residues include Thr-123 and Arg-151.

It belongs to the purine/pyrimidine phosphoribosyltransferase family. PyrE subfamily. Homodimer. Requires Mg(2+) as cofactor.

The enzyme catalyses orotidine 5'-phosphate + diphosphate = orotate + 5-phospho-alpha-D-ribose 1-diphosphate. Its pathway is pyrimidine metabolism; UMP biosynthesis via de novo pathway; UMP from orotate: step 1/2. Its function is as follows. Catalyzes the transfer of a ribosyl phosphate group from 5-phosphoribose 1-diphosphate to orotate, leading to the formation of orotidine monophosphate (OMP). The polypeptide is Orotate phosphoribosyltransferase (Staphylothermus marinus (strain ATCC 43588 / DSM 3639 / JCM 9404 / F1)).